Reading from the N-terminus, the 835-residue chain is Cell division control protein 48 (835 aa).

The interval 1–21 (MGEEHKPLLDASGVDPREEDK) is disordered. ATP is bound at residue 257–263 (PGTGKTL). Glycyl lysine isopeptide (Lys-Gly) (interchain with G-Cter in ubiquitin) cross-links involve residues Lys-305, Lys-322, and Lys-346. ATP contacts are provided by Asn-358 and His-394. Residues Ser-472 and Ser-519 each carry the phosphoserine modification. Lys-522 participates in a covalent cross-link: Glycyl lysine isopeptide (Lys-Gly) (interchain with G-Cter in ubiquitin). 531–536 (GTGKTL) lines the ATP pocket. Residues Lys-539, Lys-594, and Lys-673 each participate in a glycyl lysine isopeptide (Lys-Gly) (interchain with G-Cter in ubiquitin) cross-link. A compositionally biased stretch (basic and acidic residues) spans 720 to 729 (EAEKEVKVEG). The disordered stretch occupies residues 720–746 (EAEKEVKVEGEDVEMTDEGAKAEQEPE). The residue at position 735 (Thr-735) is a Phosphothreonine. A Phosphoserine modification is found at Ser-770. The segment at 792 to 835 (SNFNFNDAPLGTTATDNANSNNSAPSGAGAAFGSNAEEDDDLYS) is disordered. The span at 802 to 826 (GTTATDNANSNNSAPSGAGAAFGSN) shows a compositional bias: low complexity.

The protein belongs to the AAA ATPase family. In terms of assembly, component of the heterotrimeric CDC48-NPL4-UFD1 ATPase complex. The CDC48-NPL4-UFD1 ATPase complex interacts with the HRD1 ubiquitin ligase complex composed of the E3 ligase HRD1, its cofactors HRD3, USA1 and DER1, substrate recruiting factor YOS9 and CDC48-binding protein UBX2. Interaction between the complexes is mediated by interaction between CDC48-NPL4-UFD1 complex member CDC48 and HRD1 complex member UBX2. Forms a complex composed of CDC48, NPL4, UFD1, UFD2 and SHP1. Forms a complex composed of CDC48, NPL4, UFD1, DOA1, SHP1 and deubiquitinase OTU1; within the complex interacts with DOA1/UFD3 and OTU1 to prevent multiubiquitination of substrates. Interacts with UFD2, to add further ubiquitin moieties; the interaction with UFD2 is prevented by DOA1/UFD3. Forms a complex composed of CDC48, DOA1, deubiquitinase UBP3 and probably BRE5; within the complex interacts with DOA1 and UBP3. Interacts (via C-terminus) with DOA1 (via PUL domain); the interaction is direct. Interacts with NPL4. Interacts with SHP1/UBX1, UBX2, UBX3, UBX4, UBX5, UBX6 and UBX7. Interacts with VMS1; the interaction recruits CDC48 to the mitochondria in response to mitochondrial stress. Component of the ribosome quality control complex (RQC), composed of the E3 ubiquitin ligase RKR1/LTN1, RQC1 and RQC2, as well as CDC48 and its ubiquitin-binding cofactors. RQC forms a stable complex with 60S ribosomal subunits. Interacts with ASE1 and CDC5; the interaction is likely to result in their degradation. Component of the DSCc E3 ligase complexes composed of at least TUL1, DSC2, DSC3, UBX3, CDC48 as well as VLD1 for the vacuole-localized complex or GLD1 for the Golgi/endosome-localized complex.

The protein localises to the microsome. It localises to the endoplasmic reticulum. It is found in the cytoplasm. The catalysed reaction is ATP + H2O = ADP + phosphate + H(+). With respect to regulation, the first ATP-binding region has low ATPase activity. The second ATP-binding region is responsible for ATPase activity. ATP binding to the first ATP-binding region induces intrinsic activity of the second ATP-binding region. While ATP binding to the first ATP-binding region appears to prevent ATP hydrolysis by the second ATP-binding region, ADP-binding to first region promotes the coordinate and cooperative ATPase cycle of the second ATP-binding region. ATP binding to the first ATP-binding region induces a conformational change, promoting the rotation of the first ATP-binding region relative to the second ATP-binding region in the hexamer. Its function is as follows. ATP-dependent chaperone which probably uses the energy provided by ATP hydrolysis to generate mechanical force to unfold substrate proteins, disassemble protein complexes, and disaggregate protein aggregates. By recruiting and promoting the degradation of ubiquitinated proteins, plays a role in the ubiquitin fusion degradation (UFD) pathway. Has a role in the endoplasmic reticulum-associated degradation (ERAD) pathway which mediates the cytoplasmic elimination of misfolded proteins exported from the ER. Required for the proteasome-dependent processing/activation of MGA2 and SPT23 transcription factors leading to the subsequent expression of OLE1. Has an additional role in the turnover of OLE1 where it targets ubiquitinated OLE1 and other proteins to the ERAD. Regulates ubiquitin-mediated mitochondria protein degradation. Involved in spindle disassembly probably by promoting the degradation of spindle assembly factors ASE1 and CDC5 at the end of mitosis. Component of the ribosome quality control complex (RQC), a ribosome-associated complex that mediates ubiquitination and extraction of incompletely synthesized nascent chains for proteasomal degradation. CDC48 may provide the mechanical force that dislodges the polyubiquitinated nascent peptides from the exit channel. Required for ribophagy, a process which relocalizes ribosomal particles into the vacuole for degradation in response to starvation. Component of the DSC E3 ubiquitin ligase complexes that tag proteins present in Golgi, endosome and vacuole membranes and function in protein homeostasis under non-stress conditions and support a role in protein quality control. Substrate initially binds through the attached polyubiquitin chain to UDF1/NPL4 and then moves through the pore of the ATPase rings and is thereby unfolded. Acts on a broad range of even well-folded proteins via ubiquitin-binding and unfolding to initiate substrate processing. Involved in degradation of mislocalized tail-anchored transmembrane proteins extracted from the mitochondrion outer membrane by MSP1 and ubiquitinated by DOA10. The chain is Cell division control protein 48 from Saccharomyces cerevisiae (strain ATCC 204508 / S288c) (Baker's yeast).